A 433-amino-acid chain; its full sequence is Protein root UVB sensitive 2, chloroplastic (433 aa).

The protein belongs to the RUS1 family. Interacts (via the DUF647 domain) with RUS1 (via the DUF647 domain). Expressed throughout the plant, with a higher expression near the root apical meristem, in the cortex region of the root elongation zone, in lateral roots and emerging lateral roots. Not detected in extreme root apical meristem or root cap.

Its subcellular location is the plastid. Its function is as follows. Involved in a root UV-B sensing pathway and in the protection against the hypersensitivity to very low-fluence-rate (VLF) UV-B. RSU1 and RUS2 are probably both negative modulators of the same UV-B perception pathway, which when overstimulated in the roots causes a block to postgermination development. Required for polar auxin transport and to maintain the normal levels of PIN proteins in the root. The sequence is that of Protein root UVB sensitive 2, chloroplastic from Arabidopsis thaliana (Mouse-ear cress).